Reading from the N-terminus, the 175-residue chain is NADH-ubiquinone oxidoreductase chain 6 (175 aa).

The next 5 helical transmembrane spans lie at Met1–Ser21, Ser25–Leu45, Phe47–Val67, Thr88–Leu108, and Tyr149–Met169.

Belongs to the complex I subunit 6 family. As to quaternary structure, core subunit of respiratory chain NADH dehydrogenase (Complex I) which is composed of 45 different subunits.

The protein localises to the mitochondrion inner membrane. It carries out the reaction a ubiquinone + NADH + 5 H(+)(in) = a ubiquinol + NAD(+) + 4 H(+)(out). Functionally, core subunit of the mitochondrial membrane respiratory chain NADH dehydrogenase (Complex I) which catalyzes electron transfer from NADH through the respiratory chain, using ubiquinone as an electron acceptor. Essential for the catalytic activity and assembly of complex I. The polypeptide is NADH-ubiquinone oxidoreductase chain 6 (MT-ND6) (Sus scrofa (Pig)).